A 237-amino-acid polypeptide reads, in one-letter code: MDLLLGIVQGLTEFLPISSSGHLTLLSHLLKTDLNAYQTAVLHLGTLVSVVLFALDGIRRSLRSWRIILNLIVSTIPAGVFGVLFEKQIDQLFSSPRFLPLFFSATALILMFTRYSSSGEKRMENMSFLDALLVGIAQLFALFPGISRSGITVSSLLFMKYRSEDALQYSFLMSIPVVLGAGILGLGKGNVTILAPIFAFLSGLFALYVLSRSVRSGKIWQFSYYCLFVAILSYLAG.

7 helical membrane passes run 38–58 (QTAV…LDGI), 65–85 (WRII…GVLF), 92–112 (LFSS…ILMF), 126–146 (MSFL…FPGI), 166–186 (ALQY…ILGL), 191–211 (VTIL…YVLS), and 217–237 (GKIW…YLAG).

This sequence belongs to the UppP family.

It is found in the cell inner membrane. The enzyme catalyses di-trans,octa-cis-undecaprenyl diphosphate + H2O = di-trans,octa-cis-undecaprenyl phosphate + phosphate + H(+). Functionally, catalyzes the dephosphorylation of undecaprenyl diphosphate (UPP). Confers resistance to bacitracin. The protein is Undecaprenyl-diphosphatase of Thermotoga maritima (strain ATCC 43589 / DSM 3109 / JCM 10099 / NBRC 100826 / MSB8).